The following is a 1417-amino-acid chain: DNA-directed RNA polymerase subunit beta' (1417 aa).

The Zn(2+) site is built by Cys-68, Cys-70, Cys-83, and Cys-86. Mg(2+) is bound by residues Asp-458, Asp-460, and Asp-462. Residues Cys-811, Cys-884, Cys-891, and Cys-894 each contribute to the Zn(2+) site.

It belongs to the RNA polymerase beta' chain family. In terms of assembly, the RNAP catalytic core consists of 2 alpha, 1 beta, 1 beta' and 1 omega subunit. When a sigma factor is associated with the core the holoenzyme is formed, which can initiate transcription. Requires Mg(2+) as cofactor. The cofactor is Zn(2+).

It carries out the reaction RNA(n) + a ribonucleoside 5'-triphosphate = RNA(n+1) + diphosphate. DNA-dependent RNA polymerase catalyzes the transcription of DNA into RNA using the four ribonucleoside triphosphates as substrates. This chain is DNA-directed RNA polymerase subunit beta', found in Francisella tularensis subsp. mediasiatica (strain FSC147).